The following is a 70-amino-acid chain: Small ribosomal subunit protein bS21B (70 aa).

Belongs to the bacterial ribosomal protein bS21 family.

In Rhizobium etli (strain ATCC 51251 / DSM 11541 / JCM 21823 / NBRC 15573 / CFN 42), this protein is Small ribosomal subunit protein bS21B.